Reading from the N-terminus, the 61-residue chain is MAKKSMVAKSKRPAKFSTQAYTRCEKCGRPHSVYRKFKLCRVCFRELAYKGQIPGVTKASW.

4 residues coordinate Zn(2+): Cys-24, Cys-27, Cys-40, and Cys-43.

The protein belongs to the universal ribosomal protein uS14 family. Zinc-binding uS14 subfamily. As to quaternary structure, part of the 30S ribosomal subunit. Contacts proteins S3 and S10. The cofactor is Zn(2+).

Its function is as follows. Binds 16S rRNA, required for the assembly of 30S particles and may also be responsible for determining the conformation of the 16S rRNA at the A site. The polypeptide is Small ribosomal subunit protein uS14 (Streptococcus mutans serotype c (strain ATCC 700610 / UA159)).